A 164-amino-acid polypeptide reads, in one-letter code: T-cell surface glycoprotein CD3 zeta chain (164 aa).

The signal sequence occupies residues 1–21 (MKWKALFTAAILQAQLPITEA). At 22–30 (QSFGLLDPK) the chain is on the extracellular side. The helical transmembrane segment at 31-51 (LCYLLDGILFIYGVILTALFL) threads the bilayer. Topologically, residues 52-164 (RVKFSRSADA…ALHMQALPPR (113 aa)) are cytoplasmic. Ser-58 carries the phosphoserine modification. ITAM domains lie at 61 to 89 (APAYQQGQNQLYNELNLGRREEYDVLDKR), 100 to 128 (PQRRKNPQEGLYNELQKDKMAEAYSEIGM), and 131 to 159 (ERRRGKGHDGLYQGLSTATKDTYDALHMQ). Tyr-64, Tyr-72, Tyr-83, Tyr-111, Tyr-123, Tyr-142, and Tyr-153 each carry phosphotyrosine. A compositionally biased stretch (basic and acidic residues) spans 83-96 (YDVLDKRRGRDPEM). Residues 83 to 111 (YDVLDKRRGRDPEMGGKPQRRKNPQEGLY) form a disordered region. Positions 128 to 154 (MKGERRRGKGHDGLYQGLSTATKDTYD) are disordered.

It belongs to the CD3Z/FCER1G family. The TCR-CD3 complex is composed of a CD3D/CD3E and a CD3G/CD3E heterodimers that preferentially associate with TCRalpha and TCRbeta, respectively, to form TCRalpha/CD3E/CD3G and TCRbeta/CD3G/CD3E trimers. In turn, the hexamer interacts with CD3Z homodimer to form the TCR-CD3 complex. Alternatively, TCRalpha and TCRbeta can be replaced by TCRgamma and TCRdelta. Interacts with SLA. Interacts with TRAT1. Interacts with DOCK2. Interacts with SLA2. Interacts with SHB. Interacts with ZAP70. Interacts (tyrosine phosphorylated) with SHC1 (via SH2 domain). Interacts with PTPRC. Interacts with CRK; this interaction regulates CD3Z phosphorylation. Interacts (on T cell side) with CD81, ICAM1 and CD9 at immunological synapses between antigen-presenting cells and T cells. Interacts with CD160. Interacts with LY6E. The signaling subunit of immunoglobulin gamma (IgG) Fc receptor complex. As a homodimer or a heterodimer with FCER1G, associates with the ligand binding subunit FCGR3A (via transmembrane domain); this interaction is a prerequisite for Fc receptor complex expression on the cell surface. Interacts with CD5. In terms of assembly, (Microbial infection) Interacts with HIV-1 Nef; this interaction up-regulates the expression of the Fas ligand (FASLG) at the cell surface. As to quaternary structure, (Microbial infection) Interacts with HIV-2 Nef protein; this interaction induces down-regulation of cell surface TCR/CD3 complexes. Phosphorylated on Tyr residues after T-cell receptor triggering by LCK in association with CD4/CD8. CD3Z is expressed in normal lymphoid tissue and in peripheral blood mononuclear cells (PBMCs).

Its subcellular location is the cell membrane. In terms of biological role, part of the TCR-CD3 complex present on T-lymphocyte cell surface that plays an essential role in adaptive immune response. When antigen presenting cells (APCs) activate T-cell receptor (TCR), TCR-mediated signals are transmitted across the cell membrane by the CD3 chains CD3D, CD3E, CD3G and CD3Z. All CD3 chains contain immunoreceptor tyrosine-based activation motifs (ITAMs) in their cytoplasmic domain. Upon TCR engagement, these motifs become phosphorylated by Src family protein tyrosine kinases LCK and FYN, resulting in the activation of downstream signaling pathways. CD3Z ITAMs phosphorylation creates multiple docking sites for the protein kinase ZAP70 leading to ZAP70 phosphorylation and its conversion into a catalytically active enzyme. Plays an important role in intrathymic T-cell differentiation. Additionally, participates in the activity-dependent synapse formation of retinal ganglion cells (RGCs) in both the retina and dorsal lateral geniculate nucleus (dLGN). The polypeptide is T-cell surface glycoprotein CD3 zeta chain (CD247) (Homo sapiens (Human)).